Consider the following 259-residue polypeptide: Adenylate kinase (259 aa).

52-57 is an ATP binding site; sequence GAGKGT. An NMP region spans residues 72-101; that stretch reads ATGDMLRSQVAKKTDLGREAKKIMDQGGLV. Residues T73, R78, 99-101, 128-131, and Q135 contribute to the AMP site; these read GLV and GFPR. The tract at residues 169–206 is LID; sequence GRLVHPASGRSYHKIFNPPKEAMKDDITGEPLVQRSDD. ATP is bound by residues R170 and 179-180; that span reads SY. Positions 203 and 214 each coordinate AMP. Position 242 (Q242) interacts with ATP.

The protein belongs to the adenylate kinase family. AK2 subfamily. In terms of assembly, monomer.

It localises to the cytoplasm. The protein localises to the mitochondrion intermembrane space. It carries out the reaction AMP + ATP = 2 ADP. Functionally, catalyzes the reversible transfer of the terminal phosphate group between ATP and AMP. Plays an important role in cellular energy homeostasis and in adenine nucleotide metabolism. Adenylate kinase activity is critical for regulation of the phosphate utilization and the AMP de novo biosynthesis pathways. The sequence is that of Adenylate kinase (adk1) from Emericella nidulans (strain FGSC A4 / ATCC 38163 / CBS 112.46 / NRRL 194 / M139) (Aspergillus nidulans).